We begin with the raw amino-acid sequence, 943 residues long: MLKLLLGDPNTRKLKRYQPIVEEINFLEEEISQLTDDELRKETQNLKSTISAELDLKKQKELLEEFLPKAFAIVREASKRVLDMRHFDVQLIGGIVLNECQIAEMKTGEGKTLVATLPCYLNALTGKGVHVVTVNDYLARRDAEWMGQVHRFLGLSVGLIQQDMNPLERKKNYDCDITYATNSELGFDYLRDNMATDINEVVQRKFNYCVIDEVDSILIDEARTPLIISGQVERPQEKYQKAAELSLELLKAKELSKDGIDPEGDYEVDEKQRSCILTDQGFAKCEEYLGVSDLYNPQDPWAHYITNALKAKELFIKDVNYIIKNEEAVIVDEFTGRVMPGRRWSDGQHQAIEAKESLKIQPETQTLASITYQNFFLLYPGLAGMTGTAKTEEVEFEKTYKLESTVIPTNQTRKRQDWSDQVFKTEIGKWKAVAKETAQIHREGRPVLVGTTSVEKSELLSSLLSEEKIPHNLLNAKPENVEREAEIVAQAGRAGAVTIATNMAGRGTDIILGGNSDYMARLKLKEILVPLLVKPDNEHKPPIPKQRSSKSKGGFSKKAVTNLKKNISNSSTSLFPCKLDEAFEKKLSVLSDELVKSWGDRQLSVLELDDRIATAAEKAPTDDNSIKLLRESLSDVKKEYEKVLIHEEEKVREAGGLHVIGTERHESRRVDNQLRGRAGRQGDLGSTRFFLSLDDNLLRIFGGDRVANLMNAFRVDEDMPIESGMLTRSLESAQKKVETYYYDIRKQVFEYDEVMNNQRKAVYGERLRVLKGIDLKRQVIGYGERTMIEIVDAYINPDLPPEEWNIDQLISKVKEFIYLLDDLKSDDINLLSIEELKNYLQEQLRIAYDLKESQIEKIRPGLMREAERFFILQQIDNLWREHLQSMDSLRESVGLRGYGQKDPLIEYKNEGYDMFLEMMTNMRRNVIYSMFMFQPKTDVNEKN.

ATP contacts are provided by residues glutamine 90, 108 to 112 (GEGKT), and aspartate 509. A disordered region spans residues 537–556 (NEHKPPIPKQRSSKSKGGFS).

Belongs to the SecA family. Monomer and homodimer. Part of the essential Sec protein translocation apparatus which comprises SecA, SecYEG and auxiliary proteins SecDF. Other proteins may also be involved.

It is found in the cell inner membrane. The protein localises to the cellular thylakoid membrane. The protein resides in the cytoplasm. The enzyme catalyses ATP + H2O + cellular proteinSide 1 = ADP + phosphate + cellular proteinSide 2.. Functionally, part of the Sec protein translocase complex. Interacts with the SecYEG preprotein conducting channel. Has a central role in coupling the hydrolysis of ATP to the transfer of proteins into and across the cell membrane, serving as an ATP-driven molecular motor driving the stepwise translocation of polypeptide chains across the membrane. In terms of biological role, probably participates in protein translocation into and across both the cytoplasmic and thylakoid membranes in cyanobacterial cells. This is Protein translocase subunit SecA from Prochlorococcus marinus (strain MIT 9301).